Consider the following 549-residue polypeptide: Cell death protein 4 (549 aa).

A CARD domain is found at 1–91; it reads MLCEIECRAL…HLADFLEDYI (91 aa). ATP contacts are provided by Tyr-131, Gly-162, Gly-164, Lys-165, Ser-166, Val-167, Arg-273, Thr-367, and Tyr-369. The NB-ARC domain maps to 133–417; that stretch reads REYHVDRVIK…KLWSCVIPVD (285 aa). Residue Ser-166 coordinates Mg(2+).

As to quaternary structure, associates as an asymmetric homodimer with ced-9. Only one ced-4 molecule within the dimer interacts directly with ced-9. Upon release from ced-9, forms a multimer, known as the apoptosome, and interacts with ced-3; the interaction results in ced-3 autoproteolytic cleavage and activation. Multiple oligomeric states of the apoptosome are observed including hexamers, heptamers and octamers. The hexamers likely represent a pre-mature state of the apoptosome and may contribute to the regulation of ced-3 activation. The apoptosome multimer also interacts with two processed ced-3 to form a stable holoenzyme. Interacts with sex-determining protein fem-1. May form a complex composed of ced-3, ced-4 and mac-1 or of ced-9, ced-4 and mac-1. Within the complex, interacts with mac-1.

Its subcellular location is the mitochondrion. The protein localises to the cytoplasm. The protein resides in the perinuclear region. Component of the egl-1, ced-9, ced-4 and ced-3 apoptotic signaling cascade required for the initiation of programmed cell death in cells fated to die during embryonic and postembryonic development. During oogenesis, required for germline apoptosis downstream of ced-9 and upstream of ced-3 but independently of egl-1. May regulate germline apoptosis in response to DNA damage, probably downstream of let-60/ras and mpk-1 pathway. Regulates CEP neuron apoptosis in response to high Al(3+) levels. During male tail morphogenesis, promotes apoptosis of the tail-spike cell upstream of ced-3 but independently of egl-1 and ced-9. May play a role in sex-specific cell apoptosis, probably by promoting ced-3-mediated cleavage of sex-determining protein fem-1. During larval development, required for the elimination of transient presynaptic components downstream of egl-1 and ced-9 and upstream of ced-3 apoptotic pathway. Downstream of calreticulin crt-1 and upstream of ced-3 and independently of egl-1 and ced-9, plays a role in the initial steps of axonal regrowth following axotomy. Together with ain-1, a component of the miRNA-induced-silencing complex (miRISC), and probably upstream of ced-3, regulates temporal cell fate patterning during larval development. May play a role in resistance to S.typhimurium-mediated infection. In terms of biological role, plays a major role in programmed cell death. egl-1 binds to and directly inhibits the activity of ced-9, releasing the cell death activator ced-4 from a ced-9/ced-4-containing protein complex and allowing ced-4 to induce caspase ced-3 autoproteolytic cleavage and activation. Also forms a holoenzyme with processed ced-3 enhancing ced-3 activity. Its function is as follows. Prevents programmed cell death. This chain is Cell death protein 4 (ced-4), found in Caenorhabditis elegans.